A 270-amino-acid chain; its full sequence is Protein-ADP-ribose hydrolase (270 aa).

The region spanning 73 to 267 (VSVKDCQKTN…LYDTYLQKEN (195 aa)) is the Macro domain. ADP-D-ribose is bound by residues aspartate 92, isoleucine 93, and asparagine 106. Positions 112, 117, and 119 each coordinate Zn(2+). Residues cysteine 119, isoleucine 120, aspartate 121, serine 212, threonine 213, glycine 214, glutamate 215, and phenylalanine 216 each contribute to the ADP-D-ribose site.

Belongs to the MacroD-type family. Zn-Macro subfamily. Requires Zn(2+) as cofactor.

It carries out the reaction 4-O-(ADP-D-ribosyl)-L-aspartyl-[protein] + H2O = L-aspartyl-[protein] + ADP-D-ribose + H(+). Its function is as follows. ADP-ribosylhydrolase that specifically reverses the SirTM-mediated mono-ADP-ribosylation at an asparatate residue of GcvH-L, by releasing ADP-ribose from the target protein. May play a role in the regulation of the response to host-induced oxidative stress. In Streptococcus pyogenes serotype M3 (strain ATCC BAA-595 / MGAS315), this protein is Protein-ADP-ribose hydrolase.